The primary structure comprises 176 residues: Ribosome maturation factor RimM (176 aa).

The PRC barrel domain maps to 97 to 176 (DNDFYHRDLI…QIVVDWDPDF (80 aa)).

The protein belongs to the RimM family. Binds ribosomal protein uS19.

It localises to the cytoplasm. Functionally, an accessory protein needed during the final step in the assembly of 30S ribosomal subunit, possibly for assembly of the head region. Essential for efficient processing of 16S rRNA. May be needed both before and after RbfA during the maturation of 16S rRNA. It has affinity for free ribosomal 30S subunits but not for 70S ribosomes. This chain is Ribosome maturation factor RimM, found in Shewanella denitrificans (strain OS217 / ATCC BAA-1090 / DSM 15013).